An 865-amino-acid chain; its full sequence is Alanine--tRNA ligase (865 aa).

Positions 556, 560, 660, and 664 each coordinate Zn(2+).

This sequence belongs to the class-II aminoacyl-tRNA synthetase family. Requires Zn(2+) as cofactor.

It localises to the cytoplasm. The catalysed reaction is tRNA(Ala) + L-alanine + ATP = L-alanyl-tRNA(Ala) + AMP + diphosphate. Functionally, catalyzes the attachment of alanine to tRNA(Ala) in a two-step reaction: alanine is first activated by ATP to form Ala-AMP and then transferred to the acceptor end of tRNA(Ala). Also edits incorrectly charged Ser-tRNA(Ala) and Gly-tRNA(Ala) via its editing domain. The sequence is that of Alanine--tRNA ligase from Vesicomyosocius okutanii subsp. Calyptogena okutanii (strain HA).